Here is a 151-residue protein sequence, read N- to C-terminus: Coiled-coil-helix-coiled-coil-helix domain-containing protein 2 (151 aa).

Disordered regions lie at residues 1 to 50 (MPRG…AAAP) and 77 to 111 (GHAI…AQQQ). Residues 10–26 (SRMAPPASRAPQMRAAP) are compositionally biased toward low complexity. Residues 27–38 (RPAPVAQPPAAA) are compositionally biased toward pro residues. 2 stretches are compositionally biased toward low complexity: residues 39 to 50 (PPSAVGSSAAAP) and 100 to 111 (QEPQGTQPAQQQ). Positions 111-151 (QQPCLYEIKQFLECAQNQGDIKLCEGFNEVLKQCRLANGLA) constitute a CHCH domain. 2 short sequence motifs (cx9C motif) span residues 114 to 124 (CLYEIKQFLEC) and 134 to 144 (CEGFNEVLKQC). Disulfide bonds link Cys114–Cys144 and Cys124–Cys134.

As to quaternary structure, interacts with RBPJ.

The protein localises to the nucleus. It is found in the mitochondrion. It localises to the mitochondrion intermembrane space. Transcription factor. Binds to the oxygen responsive element of COX4I2 and activates its transcription under hypoxia conditions (4% oxygen), as well as normoxia conditions (20% oxygen). The sequence is that of Coiled-coil-helix-coiled-coil-helix domain-containing protein 2 (CHCHD2) from Homo sapiens (Human).